We begin with the raw amino-acid sequence, 79 residues long: uncharacterized protein (79 aa).

Positions 1–33 (MRLIIRAIVLLALVWIGLLMSGYGILVGSKVNA) are cleaved as a signal peptide.

This is an uncharacterized protein from Salmonella typhi.